The primary structure comprises 289 residues: Acetyl-coenzyme A carboxylase carboxyl transferase subunit beta (289 aa).

One can recognise a CoA carboxyltransferase N-terminal domain in the interval 28 to 289 (VMTKCPKCKK…QGEGMAVWQN (262 aa)). The Zn(2+) site is built by Cys-32, Cys-35, Cys-51, and Cys-54. Residues 32 to 54 (CPKCKKIMYTKELLKNLKVCVNC) form a C4-type zinc finger.

Belongs to the AccD/PCCB family. Acetyl-CoA carboxylase is a heterohexamer composed of biotin carboxyl carrier protein (AccB), biotin carboxylase (AccC) and two subunits each of ACCase subunit alpha (AccA) and ACCase subunit beta (AccD). The cofactor is Zn(2+).

The protein localises to the cytoplasm. It catalyses the reaction N(6)-carboxybiotinyl-L-lysyl-[protein] + acetyl-CoA = N(6)-biotinyl-L-lysyl-[protein] + malonyl-CoA. The protein operates within lipid metabolism; malonyl-CoA biosynthesis; malonyl-CoA from acetyl-CoA: step 1/1. Its function is as follows. Component of the acetyl coenzyme A carboxylase (ACC) complex. Biotin carboxylase (BC) catalyzes the carboxylation of biotin on its carrier protein (BCCP) and then the CO(2) group is transferred by the transcarboxylase to acetyl-CoA to form malonyl-CoA. This is Acetyl-coenzyme A carboxylase carboxyl transferase subunit beta from Bacillus cytotoxicus (strain DSM 22905 / CIP 110041 / 391-98 / NVH 391-98).